Here is a 469-residue protein sequence, read N- to C-terminus: UDP-N-acetylmuramate--L-alanine ligase (469 aa).

Residue 122–128 (GTHGKTT) participates in ATP binding.

The protein belongs to the MurCDEF family.

Its subcellular location is the cytoplasm. It catalyses the reaction UDP-N-acetyl-alpha-D-muramate + L-alanine + ATP = UDP-N-acetyl-alpha-D-muramoyl-L-alanine + ADP + phosphate + H(+). The protein operates within cell wall biogenesis; peptidoglycan biosynthesis. Its function is as follows. Cell wall formation. The protein is UDP-N-acetylmuramate--L-alanine ligase of Legionella pneumophila (strain Lens).